The sequence spans 684 residues: Cleavage and polyadenylation specificity factor subunit 3 (684 aa).

Ser2 carries the N-acetylserine modification. The Zn(2+) site is built by His71, His73, Asp75, His76, His158, and Asp179. The Proton donor role is filled by His396. Residue His418 coordinates Zn(2+). Residues Lys462, Lys465, and Lys545 each participate in a glycyl lysine isopeptide (Lys-Gly) (interchain with G-Cter in SUMO) cross-link. A Phosphoserine modification is found at Ser659. Thr681 carries the post-translational modification Phosphothreonine.

It belongs to the metallo-beta-lactamase superfamily. RNA-metabolizing metallo-beta-lactamase-like family. CPSF3 subfamily. Component of the cleavage and polyadenylation specificity factor (CPSF) complex, composed of CPSF1, CPSF2, CPSF3, CPSF4 and FIP1L1. Interacts with CPSF2, CSTF2 and SYMPK. Interacts with TUT1; the interaction is direct and mediates the recruitment of the CPSF complex on the 3'UTR of pre-mRNAs. Interacts with WDR33. Interacts with ZC3H3. Zn(2+) is required as a cofactor. Post-translationally, sumoylated on Lys-462, Lys-465 and Lys-545, preferentially by SUMO3.

The protein resides in the nucleus. In terms of biological role, component of the cleavage and polyadenylation specificity factor (CPSF) complex that plays a key role in pre-mRNA 3'-end formation, recognizing the AAUAAA signal sequence and interacting with poly(A) polymerase and other factors to bring about cleavage and poly(A) addition. Has endonuclease activity, and functions as an mRNA 3'-end-processing endonuclease. Also involved in the histone 3'-end pre-mRNA processing. U7 snRNP-dependent protein that induces both the 3'-endoribonucleolytic cleavage of histone pre-mRNAs and acts as a 5' to 3' exonuclease for degrading the subsequent downstream cleavage product (DCP) of mature histone mRNAs. Cleavage occurs after the 5'-ACCCA-3' sequence in the histone pre-mRNA leaving a 3'hydroxyl group on the upstream fragment containing the stem loop (SL) and 5' phosphate on the downstream cleavage product (DCP) starting with CU nucleotides. The U7-dependent 5' to 3' exonuclease activity is processive and degrades the DCP RNA substrate even after complete removal of the U7-binding site. Binds to the downstream cleavage product (DCP) of histone pre-mRNAs and the cleaved DCP RNA substrate in a U7 snRNP dependent manner. Required for entering/progressing through S-phase of the cell cycle. Required for the selective processing of microRNAs (miRNAs) during embryonic stem cell differentiation via its interaction with ISY1. Required for the biogenesis of all miRNAs from the pri-miR-17-92 primary transcript except miR-92a. Only required for the biogenesis of miR-290 and miR-96 from the pri-miR-290-295 and pri-miR-96-183 primary transcripts, respectively. The sequence is that of Cleavage and polyadenylation specificity factor subunit 3 (CPSF3) from Bos taurus (Bovine).